The primary structure comprises 267 residues: MAPWALLSPGVLVRTGHTVLTWGITLVLFLHDTELRQWEEQGELLLPLTFLLLVLGSLLLYLAVSLMDPGYVNVQPQPQEELKEEQTAMVPPAIPLRRCRYCLVLQPLRARHCRECRRCVRRYDHHCPWMENCVGERNHPLFVVYLALQLVVLLWGLYLAWSGLRFFQPWGQWLRSSGLLFATFLLLSLFSLVASLLLVSHLYLVASNTTTWEFISSHRIAYLRQRPSNPFDRGLTRNLAHFFCGWPSGSWETLWAEEEEEGSSPAV.

The Cytoplasmic portion of the chain corresponds to methionine 1–proline 9. A helical transmembrane segment spans residues glycine 10–leucine 30. Residues histidine 31–glutamate 43 lie on the Lumenal side of the membrane. Residues leucine 44 to valine 64 traverse the membrane as a helical segment. The Cytoplasmic portion of the chain corresponds to serine 65–proline 140. One can recognise a DHHC domain in the interval arginine 97 to alanine 147. Catalysis depends on cysteine 127, which acts as the S-palmitoyl cysteine intermediate. A helical transmembrane segment spans residues leucine 141–tryptophan 161. Residues serine 162 to glycine 178 are Lumenal-facing. A helical membrane pass occupies residues leucine 179–valine 199. Residues serine 200–valine 267 lie on the Cytoplasmic side of the membrane.

Belongs to the DHHC palmitoyltransferase family. Widely expressed.

It localises to the golgi apparatus membrane. Its subcellular location is the endoplasmic reticulum membrane. It catalyses the reaction L-cysteinyl-[protein] + hexadecanoyl-CoA = S-hexadecanoyl-L-cysteinyl-[protein] + CoA. Its function is as follows. Palmitoyltransferase that catalyzes the addition of palmitate onto various protein substrates. Has a palmitoyltransferase activity toward gephyrin/GPHN, regulating its clustering at synapses and its function in gamma-aminobutyric acid receptor clustering. Thereby, indirectly regulates GABAergic synaptic transmission. Negatively regulates NLRP3-driven inflammation. Catalyzes NLRP3 palmitoylation, leading to its degradation via the chaperone-mediated autophagy (CMA) process. The protein is Palmitoyltransferase ZDHHC12 of Homo sapiens (Human).